A 401-amino-acid polypeptide reads, in one-letter code: Enoyl-[acyl-carrier-protein] reductase [NADH] 1 (401 aa).

Residues G48 to Y53, F74 to E75, D111 to A112, and L139 to A140 each bind NAD(+). Residue Y225 coordinates substrate. Catalysis depends on Y235, which acts as the Proton donor. Residues K244 and V273–T275 contribute to the NAD(+) site.

The protein belongs to the TER reductase family. Monomer.

The catalysed reaction is a 2,3-saturated acyl-[ACP] + NAD(+) = a (2E)-enoyl-[ACP] + NADH + H(+). The enzyme catalyses a 2,3-saturated acyl-CoA + NAD(+) = a (2E)-enoyl-CoA + NADH + H(+). It carries out the reaction (2E)-butenoyl-[ACP] + NADH + H(+) = butanoyl-[ACP] + NAD(+). It catalyses the reaction butanoyl-CoA + NAD(+) = (2E)-butenoyl-CoA + NADH + H(+). The protein operates within lipid metabolism; fatty acid biosynthesis. Weakly inhibited by triclosan. Functionally, involved in the final reduction of the elongation cycle of fatty acid synthesis (FAS II). Catalyzes the NADH-dependent reduction of a carbon-carbon double bond in an enoyl moiety that is covalently linked to an acyl carrier protein (ACP). It can use both crotonyl-CoA and crotonyl-ACP. This is Enoyl-[acyl-carrier-protein] reductase [NADH] 1 from Vibrio cholerae serotype O1 (strain ATCC 39315 / El Tor Inaba N16961).